Reading from the N-terminus, the 821-residue chain is Lysosomal beta glucosidase (821 aa).

The N-terminal stretch at 1–24 (MKTIKSLFLLSLLIVNLLISSTYG) is a signal peptide. Residues 25-69 (SSIRVSIVGGEEAEVIEKPRTFGNKRELKLEYSQIYPKKQLNQEN) constitute a propeptide that is removed on maturation. Asn-113, Asn-146, and Asn-266 each carry an N-linked (GlcNAc...) asparagine glycan. Residue Asp-363 is part of the active site. Residues Asn-535, Asn-555, Asn-703, and Asn-721 are each glycosylated (N-linked (GlcNAc...) asparagine).

Belongs to the glycosyl hydrolase 3 family. Post-translationally, glycosylated. The polyoligosaccharides are of the high-mannose type and are highly substituted with both phosphate and sulfate moieties.

Its subcellular location is the lysosome. It carries out the reaction Hydrolysis of terminal, non-reducing beta-D-glucosyl residues with release of beta-D-glucose.. This Dictyostelium discoideum (Social amoeba) protein is Lysosomal beta glucosidase (gluA).